We begin with the raw amino-acid sequence, 277 residues long: Putative phosphoenolpyruvate synthase regulatory protein (277 aa).

156-163 (GVSRAGKT) lines the ADP pocket.

Belongs to the pyruvate, phosphate/water dikinase regulatory protein family. PSRP subfamily.

The catalysed reaction is [pyruvate, water dikinase] + ADP = [pyruvate, water dikinase]-phosphate + AMP + H(+). It catalyses the reaction [pyruvate, water dikinase]-phosphate + phosphate + H(+) = [pyruvate, water dikinase] + diphosphate. In terms of biological role, bifunctional serine/threonine kinase and phosphorylase involved in the regulation of the phosphoenolpyruvate synthase (PEPS) by catalyzing its phosphorylation/dephosphorylation. This chain is Putative phosphoenolpyruvate synthase regulatory protein, found in Deinococcus radiodurans (strain ATCC 13939 / DSM 20539 / JCM 16871 / CCUG 27074 / LMG 4051 / NBRC 15346 / NCIMB 9279 / VKM B-1422 / R1).